A 239-amino-acid chain; its full sequence is 6-phosphogluconolactonase (239 aa).

It belongs to the glucosamine/galactosamine-6-phosphate isomerase family. 6-phosphogluconolactonase subfamily.

The catalysed reaction is 6-phospho-D-glucono-1,5-lactone + H2O = 6-phospho-D-gluconate + H(+). It functions in the pathway carbohydrate degradation; pentose phosphate pathway; D-ribulose 5-phosphate from D-glucose 6-phosphate (oxidative stage): step 2/3. Functionally, hydrolysis of 6-phosphogluconolactone to 6-phosphogluconate. In Xylella fastidiosa (strain 9a5c), this protein is 6-phosphogluconolactonase (pgl).